Here is a 621-residue protein sequence, read N- to C-terminus: Chaperone protein HtpG (621 aa).

Residues 1-341 (MSNQEYTFQT…SEDLPLNVSR (341 aa)) are a; substrate-binding. Residues 342-547 (EILQQNKILA…GDEQNAMMAN (206 aa)) are b. The segment at 548–621 (LMRQMGQNMP…RLNSVLLKAL (74 aa)) is c.

This sequence belongs to the heat shock protein 90 family. In terms of assembly, homodimer.

It is found in the cytoplasm. Functionally, molecular chaperone. Has ATPase activity. In Helicobacter acinonychis (strain Sheeba), this protein is Chaperone protein HtpG.